We begin with the raw amino-acid sequence, 638 residues long: Plasma kallikrein (638 aa).

Residues 1 to 19 (MILFKQATYFISLFATVSC) form the signal peptide. Apple domains are found at residues 21–104 (CLTQ…LKQC), 111–194 (CHRD…LKPC), 201–284 (CHMN…LLTC), and 292–375 (CHSK…LRLC). Intrachain disulfides connect Cys21/Cys104, Cys47/Cys77, Cys51/Cys57, Cys111/Cys194, Cys137/Cys166, Cys141/Cys147, Cys201/Cys284, Cys227/Cys256, Cys231/Cys237, Cys292/Cys375, Cys318/Cys347, Cys322/Cys328, Cys340/Cys345, Cys383/Cys503, Cys419/Cys435, Cys517/Cys584, Cys548/Cys563, and Cys574/Cys602. Asn127 carries an N-linked (GlcNAc...) asparagine glycan. N-linked (GlcNAc...) asparagine glycosylation occurs at Asn308. In terms of domain architecture, Peptidase S1 spans 391–626 (IVGGTNSSWG…YMDWILEKTQ (236 aa)). A glycan (N-linked (GlcNAc...) asparagine) is linked at Asn396. Catalysis depends on His434, which acts as the Charge relay system. Asn453 carries N-linked (GlcNAc...) asparagine glycosylation. The Charge relay system role is filled by Asp483. N-linked (GlcNAc...) asparagine glycosylation is present at Asn494. Residue Ser578 is the Charge relay system of the active site.

It belongs to the peptidase S1 family. Plasma kallikrein subfamily. Forms a heterodimer with SERPINA5. The zymogen is activated by factor XIIa, which cleaves the molecule into a light chain, which contains the active site, and a heavy chain, which associates with HMW kininogen. These chains are linked by one or more disulfide bonds. Interacts with iripin-3, a serine protease inhibitor from Ixodes ricinus saliva. Interacts with iripin-1, a serine protease inhibitor from Ixodes ricinus saliva. As to expression, found in plasma (at protein level).

It is found in the secreted. It carries out the reaction Cleaves selectively Arg-|-Xaa and Lys-|-Xaa bonds, including Lys-|-Arg and Arg-|-Ser bonds in (human) kininogen to release bradykinin.. With respect to regulation, inhibited by SERPINA5. In terms of biological role, participates in the surface-dependent activation of blood coagulation. Activates, in a reciprocal reaction, coagulation factor XII/F12 after binding to negatively charged surfaces. Releases bradykinin from HMW kininogen and may also play a role in the renin-angiotensin system by converting prorenin into renin. The protein is Plasma kallikrein (KLKB1) of Homo sapiens (Human).